Consider the following 21-residue polypeptide: Hydroxypicolinic acid-activating enzyme (21 aa).

In terms of biological role, involved in etamycin biosynthesis. The protein is Hydroxypicolinic acid-activating enzyme of Streptomyces griseoviridis.